Here is a 259-residue protein sequence, read N- to C-terminus: Thiazole synthase (259 aa).

Lysine 95 serves as the catalytic Schiff-base intermediate with DXP. Residues glycine 156, 182 to 183 (AG), and 204 to 205 (NT) each bind 1-deoxy-D-xylulose 5-phosphate.

Belongs to the ThiG family. As to quaternary structure, homotetramer. Forms heterodimers with either ThiH or ThiS.

The protein localises to the cytoplasm. The catalysed reaction is [ThiS sulfur-carrier protein]-C-terminal-Gly-aminoethanethioate + 2-iminoacetate + 1-deoxy-D-xylulose 5-phosphate = [ThiS sulfur-carrier protein]-C-terminal Gly-Gly + 2-[(2R,5Z)-2-carboxy-4-methylthiazol-5(2H)-ylidene]ethyl phosphate + 2 H2O + H(+). Its pathway is cofactor biosynthesis; thiamine diphosphate biosynthesis. In terms of biological role, catalyzes the rearrangement of 1-deoxy-D-xylulose 5-phosphate (DXP) to produce the thiazole phosphate moiety of thiamine. Sulfur is provided by the thiocarboxylate moiety of the carrier protein ThiS. In vitro, sulfur can be provided by H(2)S. The polypeptide is Thiazole synthase (Baumannia cicadellinicola subsp. Homalodisca coagulata).